The chain runs to 167 residues: Small ribosomal subunit protein uS5 (167 aa).

The S5 DRBM domain maps to 11–74 (LQEKLIAVNR…EKARRAMINV (64 aa)).

Belongs to the universal ribosomal protein uS5 family. Part of the 30S ribosomal subunit. Contacts proteins S4 and S8.

Functionally, with S4 and S12 plays an important role in translational accuracy. In terms of biological role, located at the back of the 30S subunit body where it stabilizes the conformation of the head with respect to the body. The protein is Small ribosomal subunit protein uS5 of Yersinia enterocolitica serotype O:8 / biotype 1B (strain NCTC 13174 / 8081).